The sequence spans 133 residues: Small ribosomal subunit protein uS8 (133 aa).

It belongs to the universal ribosomal protein uS8 family. Part of the 30S ribosomal subunit. Contacts proteins S5 and S12.

Functionally, one of the primary rRNA binding proteins, it binds directly to 16S rRNA central domain where it helps coordinate assembly of the platform of the 30S subunit. In Prochlorococcus marinus subsp. pastoris (strain CCMP1986 / NIES-2087 / MED4), this protein is Small ribosomal subunit protein uS8.